A 235-amino-acid polypeptide reads, in one-letter code: Elongation factor Tu (235 aa).

In terms of domain architecture, tr-type G spans 1–125; that stretch reads KNMITGATQM…DGDKYIPTPS (125 aa). A GTP-binding site is contributed by 47–50; it reads NKQD.

The protein belongs to the TRAFAC class translation factor GTPase superfamily. Classic translation factor GTPase family. EF-Tu/EF-1A subfamily. As to quaternary structure, monomer.

It localises to the cytoplasm. It catalyses the reaction GTP + H2O = GDP + phosphate + H(+). Functionally, GTP hydrolase that promotes the GTP-dependent binding of aminoacyl-tRNA to the A-site of ribosomes during protein biosynthesis. In Leptolyngbya boryana (Plectonema boryanum), this protein is Elongation factor Tu (tufA).